A 378-amino-acid polypeptide reads, in one-letter code: Flagellar P-ring protein 2 (378 aa).

Positions methionine 1–alanine 33 are cleaved as a signal peptide.

The protein belongs to the FlgI family. The basal body constitutes a major portion of the flagellar organelle and consists of four rings (L,P,S, and M) mounted on a central rod.

It is found in the periplasm. The protein resides in the bacterial flagellum basal body. Assembles around the rod to form the L-ring and probably protects the motor/basal body from shearing forces during rotation. In Hahella chejuensis (strain KCTC 2396), this protein is Flagellar P-ring protein 2.